We begin with the raw amino-acid sequence, 396 residues long: Tryptophan synthase beta chain (396 aa).

N6-(pyridoxal phosphate)lysine is present on Lys-86.

This sequence belongs to the TrpB family. As to quaternary structure, tetramer of two alpha and two beta chains. It depends on pyridoxal 5'-phosphate as a cofactor.

The catalysed reaction is (1S,2R)-1-C-(indol-3-yl)glycerol 3-phosphate + L-serine = D-glyceraldehyde 3-phosphate + L-tryptophan + H2O. The protein operates within amino-acid biosynthesis; L-tryptophan biosynthesis; L-tryptophan from chorismate: step 5/5. Functionally, the beta subunit is responsible for the synthesis of L-tryptophan from indole and L-serine. The sequence is that of Tryptophan synthase beta chain from Francisella tularensis subsp. holarctica (strain FTNF002-00 / FTA).